The chain runs to 349 residues: tRNA pseudouridine synthase D (349 aa).

Phe27 serves as a coordination point for substrate. Asp80 acts as the Nucleophile in catalysis. Asn129 provides a ligand contact to substrate. Residues 155–303 enclose the TRUD domain; sequence GVPNYFGAQR…VEAARRAMLL (149 aa). Position 329 (Phe329) interacts with substrate.

Belongs to the pseudouridine synthase TruD family.

The catalysed reaction is uridine(13) in tRNA = pseudouridine(13) in tRNA. Responsible for synthesis of pseudouridine from uracil-13 in transfer RNAs. This chain is tRNA pseudouridine synthase D, found in Escherichia coli O6:K15:H31 (strain 536 / UPEC).